Consider the following 127-residue polypeptide: Aspartate 1-decarboxylase (127 aa).

Ser25 acts as the Schiff-base intermediate with substrate; via pyruvic acid in catalysis. Pyruvic acid (Ser) is present on Ser25. Thr57 lines the substrate pocket. Tyr58 (proton donor) is an active-site residue. Residue 73-75 participates in substrate binding; sequence GAA.

Belongs to the PanD family. Heterooctamer of four alpha and four beta subunits. It depends on pyruvate as a cofactor. Is synthesized initially as an inactive proenzyme, which is activated by self-cleavage at a specific serine bond to produce a beta-subunit with a hydroxyl group at its C-terminus and an alpha-subunit with a pyruvoyl group at its N-terminus.

The protein resides in the cytoplasm. It catalyses the reaction L-aspartate + H(+) = beta-alanine + CO2. It functions in the pathway cofactor biosynthesis; (R)-pantothenate biosynthesis; beta-alanine from L-aspartate: step 1/1. Catalyzes the pyruvoyl-dependent decarboxylation of aspartate to produce beta-alanine. The polypeptide is Aspartate 1-decarboxylase (Clostridium botulinum (strain 657 / Type Ba4)).